The primary structure comprises 2771 residues: Kinesin-like protein KIN-12D (2771 aa).

Composition is skewed to basic and acidic residues over residues 1–13 (MSKETKLSRRDSD) and 40–54 (KNPKHECGSKIDRTP). Disordered stretches follow at residues 1-73 (MSKE…TPDK) and 117-139 (YSETNSTQNTPTKSVSKPPGSCY). Polar residues predominate over residues 118–131 (SETNSTQNTPTKSV). A Kinesin motor domain is found at 193–530 (NVQILIRVRP…LKFAQRAKLI (338 aa)). 274–281 (GQTGSGKT) is a binding site for ATP. Microtubules-binding stretches follow at residues 400–404 (SSRSH), 431–437 (VDLAGSE), and 479–483 (HIPYR). Coiled-coil stretches lie at residues 1033 to 1110 (AATA…NEME), 1267 to 1331 (ELKQ…MKEK), 1410 to 1505 (IILL…YVEN), 2108 to 2390 (ELED…EQVK), and 2512 to 2677 (RERD…LAQE). The segment covering 2727–2736 (LKGKAKSRRS) has biased composition (basic residues). The tract at residues 2727-2771 (LKGKAKSRRSRNPERKMPSMPSPRRSWSQSPRSMSQVPFFSSLDR) is disordered. The segment covering 2744-2762 (PSMPSPRRSWSQSPRSMSQ) has biased composition (low complexity).

This sequence belongs to the TRAFAC class myosin-kinesin ATPase superfamily. Kinesin family. KIN-12 subfamily. Expressed in tissues enriched in dividing cells, such as root meristems, root primordia, and leaf primordia/young leaves.

The protein localises to the cytoplasm. Its subcellular location is the cytoskeleton. The protein resides in the phragmoplast. Involved in the spatial control of cytokinesis by a proper phragmoplast guidance. The polypeptide is Kinesin-like protein KIN-12D (Arabidopsis thaliana (Mouse-ear cress)).